The chain runs to 1197 residues: SRC kinase signaling inhibitor 1 (1197 aa).

Residues 19-45 (AEGRARSPREEVGPRDPGGRGEPDPER) show a composition bias toward basic and acidic residues. Residues 19–80 (AEGRARSPRE…GGSGGRRFSN (62 aa)) are disordered. A phosphoserine mark is found at Ser-47 and Ser-52. Over residues 65-75 (LGGGGSGGSGG) the composition is skewed to gly residues. Ser-79 carries the post-translational modification Phosphoserine. At Thr-86 the chain carries Phosphothreonine. Residues Ser-87, Ser-98, Ser-178, Ser-200, Ser-204, Ser-214, and Ser-260 each carry the phosphoserine modification. Tyr-276 is modified (phosphotyrosine). A disordered region spans residues 319-415 (ASRESSPTRR…RRDVKPDEDL (97 aa)). The span at 321–331 (RESSPTRRLNN) shows a compositional bias: polar residues. Over residues 332–341 (LSPASHLASS) the composition is skewed to low complexity. 3 positions are modified to phosphoserine: Ser-333, Ser-342, and Ser-359. A compositionally biased stretch (low complexity) spans 348 to 366 (PSGLPSGLPSGSPSRSRLS). Arg-364 and Arg-371 each carry omega-N-methylarginine. Ser-378, Ser-397, and Ser-399 each carry phosphoserine. Positions 391-400 (PTSQGVSPSP) are enriched in polar residues. The segment covering 404–415 (LERRDVKPDEDL) has biased composition (basic and acidic residues). Residue Tyr-431 is modified to Phosphotyrosine. Positions 501–676 (GFRLPPSSPQ…AVSSTPAGQP (176 aa)) are disordered. A compositionally biased stretch (pro residues) spans 520-531 (GGPPPPHSPYSG). Phosphoserine is present on residues Ser-527, Ser-530, and Ser-534. Arg-535 is modified (omega-N-methylarginine). 5 positions are modified to phosphoserine: Ser-537, Ser-547, Ser-549, Ser-551, and Ser-556. Positions 595–607 (KDTETRERMEAME) are enriched in basic and acidic residues. Ser-631 and Ser-655 each carry phosphoserine. Residues Thr-658 and Thr-671 each carry the phosphothreonine modification. The segment at 681–731 (RLQMQMHLRGLQNSASDLRGQLQQLRKLQLQNQESVRALLKRTEAELSMRV) is interaction with SNAP25. 2 coiled-coil regions span residues 688–708 (LRGLQNSASDLRGQLQQLRKL) and 760–780 (EELITQQLNDLEKSVEKIQRD). Phosphoserine occurs at positions 878 and 900. Disordered stretches follow at residues 891–949 (GLDF…ERDW) and 983–1065 (DCAS…VVTS). A Phosphothreonine modification is found at Thr-918. Ser-1021 bears the Phosphoserine mark. Residues 1036–1045 (KSPPPPPPRR) show a composition bias toward pro residues. Residues Ser-1077 and Ser-1094 each carry the phosphoserine modification. Positions 1141-1163 (SRLKAAQGPAGSPDKGKHGKQRT) are disordered.

The protein belongs to the SRCIN1 family. As to quaternary structure, interacts with BCAR1/p130Cas through its C-terminal domain and with CSK, CTTN and SRC. Also interacts with MAPRE3/EB3, SORBS3/vinexin and the N-terminal coiled-coil region of SNAP25. In terms of processing, tyrosine-phosphorylated in response to EGF and to cell adhesion to integrin ligands. In terms of tissue distribution, expressed exclusively in brain. Abundant in telencephalon and expressed moderately in cerebellum, hypothalamus, thalamus, superior and inferior colliculi, and olfactory bulb. No expression detected in medulla oblongata, spinal cord or pituitary gland. Enriched in the neuropil rather than soma in the thalamus, corpus striatum and cerebral cortex. Detected in astrocytes.

Its subcellular location is the cytoplasm. It localises to the cytoskeleton. The protein localises to the cell projection. It is found in the axon. The protein resides in the dendrite. Its subcellular location is the presynapse. It localises to the postsynapse. The protein localises to the postsynaptic density. In terms of biological role, acts as a negative regulator of SRC by activating CSK which inhibits SRC activity and downstream signaling, leading to impaired cell spreading and migration. Regulates dendritic spine morphology. Involved in calcium-dependent exocytosis. May play a role in neurotransmitter release or synapse maintenance. This Rattus norvegicus (Rat) protein is SRC kinase signaling inhibitor 1.